The primary structure comprises 585 residues: MGRKLLGLLMLAVLLAGCAGVPSSSAPQAIGTVERPAPSNLPKPTPGMDPDVLLREFLKATADPANRHLAARQFLTQSASNAWDDAGSALLIDHVVFVETRAAERVSATMRADILGSLSDMGVFETAEGVLPDPGPIELVKTSGGWRIDRLPNGVFLDWQQFQATYKRNTLYFADPTGKTVVPDPRYVAVPDHDQLATELVSKLIAGPRPEMAHTVRNLLAPPLRLRGPVTRADGGKSGIGRGYGGARIDLEKLSTTDPHSRQLVAAQIIWTLARADIRGPYVINADGAPLDDRFRDGWTTSDVAATDPGVADGAGAGLHALVNGSLVSLDGQHTVVVPGAFGRMGDQTGAALSRNGRQVASVVTLHRGAPDMAASLWIGDLGAEAVQSADGHSLSRPTWSLDDVVWVVVDGNNVLRAIQEPASGQPARLPVDSVAVATRFPGPITDLQLSRDSTRAAMVIGGQVILASVEQTQAGQYALTYPRRLGFGLGNSVVSLSWRTGDDIVVTRTDSSHPVSYVNLDGVNSDAPPHGVQMPVTTVVANPSTAYVAGPQGVLQYSPSADGQQGWSEVPGLTVPGAAPVLPG.

The N-terminal stretch at 1–17 (MGRKLLGLLMLAVLLAG) is a signal peptide. C18 carries N-palmitoyl cysteine lipidation. C18 carries S-diacylglycerol cysteine lipidation. 2 disordered regions span residues 24-48 (SSAP…TPGM) and 560-585 (PSAD…VLPG).

The protein belongs to the LpqB lipoprotein family.

It localises to the cell membrane. This is Lipoprotein LpqB from Mycolicibacterium paratuberculosis (strain ATCC BAA-968 / K-10) (Mycobacterium paratuberculosis).